The sequence spans 671 residues: DNA ligase (671 aa).

Residues 32–36 (DAEYD), 81–82 (SL), and Glu-113 contribute to the NAD(+) site. Lys-115 functions as the N6-AMP-lysine intermediate in the catalytic mechanism. Positions 136, 173, 290, and 314 each coordinate NAD(+). The Zn(2+) site is built by Cys-408, Cys-411, Cys-426, and Cys-432. In terms of domain architecture, BRCT spans 593–671 (EIDSPFAGKT…EAEMIRLLGA (79 aa)).

Belongs to the NAD-dependent DNA ligase family. LigA subfamily. It depends on Mg(2+) as a cofactor. Mn(2+) is required as a cofactor.

The catalysed reaction is NAD(+) + (deoxyribonucleotide)n-3'-hydroxyl + 5'-phospho-(deoxyribonucleotide)m = (deoxyribonucleotide)n+m + AMP + beta-nicotinamide D-nucleotide.. DNA ligase that catalyzes the formation of phosphodiester linkages between 5'-phosphoryl and 3'-hydroxyl groups in double-stranded DNA using NAD as a coenzyme and as the energy source for the reaction. It is essential for DNA replication and repair of damaged DNA. The chain is DNA ligase from Salmonella dublin (strain CT_02021853).